The primary structure comprises 949 residues: MAQVAVSTLPVEEESSSETRMVVTFLVSALESMCKELAKSKAEVACIAVYETDVFVVGTERGCAFVNARTDFQKDFAKYCVAEGLCEVKPPCPVNGMQVHSGETEILRKAVEDYFCFCYGKALGTTVMVPVPYEKMLRDQSAVVVQGLPEGVAFQHPENYDLATLKWILENKAGISFIINRPFLGPESQLGGPGMVTDAERSIVSPSESCGPINVKTEPMEDSGISLKAEAVSVKKESEDPNYYQYNMQGSHPSSTSNEVIEMELPMEDSTPLVPSEEPNEDPEAEVKIEGNTNSSSVTNSAAGVEDLNIVQVTVPDNEKERLSSIEKIKQLREQVNDLFSRKFGEAIGVDFPVKVPYRKITFNPGCVVIDGMPPGVVFKAPGYLEISSMRRILEAAEFIKFTVIRPLPGLELSNVGKRKIDQEGRVFQEKWERAYFFVEVQNIPTCLICKQSMSVSKEYNLRRHYQTNHSKHYDQYTERMRDEKLHELKKGLRKYLLGSSDTECPEQKQVFANPSPTQKSPVQPVEDLAGNLWEKLREKIRSFVAYSIAIDEITDINNTTQLAIFIRGVDENFDVSEELLDTVPMTGTKSGNEIFLRVEKSLKKFCINWSRLVSVASTGTPAMVDANNGLVTKLKSRVATFCKGAELKSICCIIHPESLCAQKLKMDHVMDVVVKSVNWICSRGLNHSEFTTLLYELDSQYGSLLYYTEIKWLSRGLVLKRFFESLEEIDSFMSSRGKPLPQLSSIDWIRDLAFLVDMTMHLNALNISLQGHSQIVTQMYDLIRAFLAKLCLWETHLTRNNLAHFPTLKLVSRNESDGLNYIPKIAELKTEFQKRLSDFKLYESELTLFSSPFSTKIDSVHEELQMEVIDLQCNTVLKTKYDKVGIPEFYKYLWGSYPKYKHHCAKILSMFGSTYICEQLFSIMKLSKTKYCSQLKDSQWDSVLHIAT.

GTF2I-like repeat units follow at residues 98-192 and 323-417; these read QVHS…QLGG and LSSI…SNVG.

The protein belongs to the TFII-I family. As to expression, ubiquitous.

Its subcellular location is the nucleus. The polypeptide is General transcription factor II-I repeat domain-containing protein 2B (GTF2IRD2B) (Homo sapiens (Human)).